We begin with the raw amino-acid sequence, 1202 residues long: DNA-directed RNA polymerase subunit beta (1202 aa).

Acidic residues predominate over residues 1151-1162 (LRDMDEEDDDVV). The interval 1151-1202 (LRDMDEEDDDVVNVDALSKYAEKQNEKTNASAEEAKAPSTESAPVETKNNQN) is disordered. Residues 1189 to 1202 (STESAPVETKNNQN) show a composition bias toward polar residues.

Belongs to the RNA polymerase beta chain family. The RNAP catalytic core consists of 2 alpha, 1 beta, 1 beta' and 1 omega subunit. When a sigma factor is associated with the core the holoenzyme is formed, which can initiate transcription.

It catalyses the reaction RNA(n) + a ribonucleoside 5'-triphosphate = RNA(n+1) + diphosphate. Functionally, DNA-dependent RNA polymerase catalyzes the transcription of DNA into RNA using the four ribonucleoside triphosphates as substrates. This is DNA-directed RNA polymerase subunit beta from Pediococcus pentosaceus (strain ATCC 25745 / CCUG 21536 / LMG 10740 / 183-1w).